A 625-amino-acid polypeptide reads, in one-letter code: Basic helix-loop-helix ARNT-like protein 1 (625 aa).

A disordered region spans residues 1–60 (MADQRMDISSTISDFMSPGPTDLLSSSLGTSGVDCNRKRKGSSTDYQESMDTDKDDPHGR). Position 17 is a phosphoserine; by GSK3-beta (Ser-17). A compositionally biased stretch (low complexity) spans 17-32 (SPGPTDLLSSSLGTSG). Thr-21 is modified (phosphothreonine; by GSK3-beta). The Nuclear localization signal signature appears at 36–41 (NRKRKG). Residues 51-60 (DTDKDDPHGR) are compositionally biased toward basic and acidic residues. In terms of domain architecture, bHLH spans 72–125 (NAREAHSQIEKRRRDKMNSFIDELASLVPTCNAMSRKLDKLTVLRMAVQHMKTL). Ser-78 bears the Phosphoserine mark. A Phosphoserine; by CK2 modification is found at Ser-90. The Nuclear export signal 1 motif lies at 142–152 (LSDDELKHLIL). A PAS 1 domain is found at 143–215 (SDDELKHLIL…EQLSSSDTAP (73 aa)). Lys-252 participates in a covalent cross-link: Glycyl lysine isopeptide (Lys-Gly) (interchain with G-Cter in SUMO2 and SUMO3). A Glycyl lysine isopeptide (Lys-Gly) (interchain with G-Cter in SUMO); alternate cross-link involves residue Lys-259. Residue Lys-259 forms a Glycyl lysine isopeptide (Lys-Gly) (interchain with G-Cter in SUMO2); alternate linkage. Residues 325–395 (PQPVNGEIRV…ECHRQVLQTR (71 aa)) form the PAS 2 domain. The Nuclear export signal 2 signature appears at 360-368 (LAYLPQELL). The 44-residue stretch at 400 to 443 (TNCYKFKIKDGSFITLRSRWFSFMNPWTKEVEYIVSTNTVVLAN) folds into the PAC domain. 2 disordered regions span residues 454–491 (QLTA…RAGA) and 510–594 (GSSP…SPSN). An interaction with CIART region spans residues 507-587 (RIRGSSPSSC…IGIDMIDNDQ (81 aa)). Positions 510–520 (GSSPSSCGSSP) are enriched in low complexity. Lys-537 carries the post-translational modification N6-acetyllysine.

Component of the circadian clock oscillator which includes the CRY1/2 proteins, CLOCK or NPAS2, BMAL1 or BMAL2, CSNK1D and/or CSNK1E, TIMELESS and the PER1/2/3 proteins. Forms a heterodimer with CLOCK. The CLOCK-BMAL1 heterodimer is required for E-box-dependent transactivation, for CLOCK nuclear translocation and degradation, and, for phosphorylation of both CLOCK and BMAL1. Part of a nuclear complex which also includes RACK1 and PRKCA; RACK1 and PRKCA are recruited to the complex in a circadian manner. Interacts with NPAS2. Interacts with EZH2. Interacts with SUMO3. Interacts with SIRT1. Interacts with AHR. Interacts with ID1, ID2 and ID3. Interacts with DDX4. Interacts with OGT. Interacts with EED and SUZ12. Interacts with MTA1. Interacts with CIART. Interacts with HSP90. Interacts with KAT2B and EP300. Interacts with BHLHE40/DEC1 and BHLHE41/DEC2. Interacts with RELB and the interaction is enhanced in the presence of CLOCK. Interacts with PER1, PER2, CRY1 and CRY2 and this interaction requires a translocation to the nucleus. Interaction of the CLOCK-BMAL1 heterodimer with PER or CRY inhibits transcription activation. Interaction of the CLOCK-BMAL1 with CRY1 is independent of DNA but with PER2 is off DNA. The CLOCK-BMAL1 heterodimer interacts with GSK3B. Interacts with KDM5A. Interacts with KMT2A; in a circadian manner. Interacts with UBE3A. Interacts with PRKCG. Interacts with MAGEL2. Interacts with NCOA2. Interacts with THRAP3. The CLOCK-BMAL1 heterodimer interacts with PASD1. Interacts with PASD1. Interacts with USP9X. Interacts with PIWIL2 (via PIWI domain). Interacts with HDAC3. Interacts with HNF4A. In terms of processing, ubiquitinated, leading to its proteasomal degradation. Deubiquitinated by USP9X. Post-translationally, O-glycosylated; contains O-GlcNAc. O-glycosylation by OGT prevents protein degradation by inhibiting ubiquitination. It also stabilizes the CLOCK-BMAL1 heterodimer thereby increasing CLOCK-BMAL1-mediated transcription of genes in the negative loop of the circadian clock such as PER1/2/3 and CRY1/2. Acetylated on Lys-537 by CLOCK during the repression phase of the circadian cycle. Acetylation facilitates recruitment of CRY1 protein and initiates the repression phase of the circadian cycle. Acetylated at Lys-537 by KAT5 during the activation phase of the cycle, leading to recruitment of the positive transcription elongation factor b (P-TEFb) and BRD4, followed by productive elongation of circadian transcripts. Deacetylated by SIRT1, which may result in decreased protein stability. In terms of processing, phosphorylated upon dimerization with CLOCK. Phosphorylation enhances the transcriptional activity, alters the subcellular localization and decreases the stability of the CLOCK-BMAL1 heterodimer by promoting its degradation. Phosphorylation shows circadian variations in the liver with a peak between CT10 to CT14. Phosphorylation at Ser-90 by CK2 is essential for its nuclear localization, its interaction with CLOCK and controls CLOCK nuclear entry. Dephosphorylation at Ser-78 is important for dimerization with CLOCK and transcriptional activity. Post-translationally, sumoylated on Lys-259 upon dimerization with CLOCK. Predominantly conjugated to poly-SUMO2/3 rather than SUMO1 and the level of these conjugates undergo rhythmic variation, peaking at CT9-CT12. Sumoylation localizes it exclusively to the PML body and promotes its ubiquitination in the PML body, ubiquitin-dependent proteasomal degradation and the transcriptional activity of the CLOCK-BMAL1 heterodimer. Undergoes lysosome-mediated degradation in a time-dependent manner in the liver.

The protein resides in the nucleus. The protein localises to the cytoplasm. Its subcellular location is the PML body. Transcriptional activator which forms a core component of the circadian clock. The circadian clock, an internal time-keeping system, regulates various physiological processes through the generation of approximately 24 hour circadian rhythms in gene expression, which are translated into rhythms in metabolism and behavior. It is derived from the Latin roots 'circa' (about) and 'diem' (day) and acts as an important regulator of a wide array of physiological functions including metabolism, sleep, body temperature, blood pressure, endocrine, immune, cardiovascular, and renal function. Consists of two major components: the central clock, residing in the suprachiasmatic nucleus (SCN) of the brain, and the peripheral clocks that are present in nearly every tissue and organ system. Both the central and peripheral clocks can be reset by environmental cues, also known as Zeitgebers (German for 'timegivers'). The predominant Zeitgeber for the central clock is light, which is sensed by retina and signals directly to the SCN. The central clock entrains the peripheral clocks through neuronal and hormonal signals, body temperature and feeding-related cues, aligning all clocks with the external light/dark cycle. Circadian rhythms allow an organism to achieve temporal homeostasis with its environment at the molecular level by regulating gene expression to create a peak of protein expression once every 24 hours to control when a particular physiological process is most active with respect to the solar day. Transcription and translation of core clock components (CLOCK, NPAS2, BMAL1, BMAL2, PER1, PER2, PER3, CRY1 and CRY2) plays a critical role in rhythm generation, whereas delays imposed by post-translational modifications (PTMs) are important for determining the period (tau) of the rhythms (tau refers to the period of a rhythm and is the length, in time, of one complete cycle). A diurnal rhythm is synchronized with the day/night cycle, while the ultradian and infradian rhythms have a period shorter and longer than 24 hours, respectively. Disruptions in the circadian rhythms contribute to the pathology of cardiovascular diseases, cancer, metabolic syndromes and aging. A transcription/translation feedback loop (TTFL) forms the core of the molecular circadian clock mechanism. Transcription factors, CLOCK or NPAS2 and BMAL1 or BMAL2, form the positive limb of the feedback loop, act in the form of a heterodimer and activate the transcription of core clock genes and clock-controlled genes (involved in key metabolic processes), harboring E-box elements (5'-CACGTG-3') within their promoters. The core clock genes: PER1/2/3 and CRY1/2 which are transcriptional repressors form the negative limb of the feedback loop and interact with the CLOCK|NPAS2-BMAL1|BMAL2 heterodimer inhibiting its activity and thereby negatively regulating their own expression. This heterodimer also activates nuclear receptors NR1D1/2 and RORA/B/G, which form a second feedback loop and which activate and repress BMAL1 transcription, respectively. BMAL1 positively regulates myogenesis and negatively regulates adipogenesis via the transcriptional control of the genes of the canonical Wnt signaling pathway. Plays a role in normal pancreatic beta-cell function; regulates glucose-stimulated insulin secretion via the regulation of antioxidant genes NFE2L2/NRF2 and its targets SESN2, PRDX3, CCLC and CCLM. Negatively regulates the mTORC1 signaling pathway; regulates the expression of MTOR and DEPTOR. Controls diurnal oscillations of Ly6C inflammatory monocytes; rhythmic recruitment of the PRC2 complex imparts diurnal variation to chemokine expression that is necessary to sustain Ly6C monocyte rhythms. Regulates the expression of HSD3B2, STAR, PTGS2, CYP11A1, CYP19A1 and LHCGR in the ovary and also the genes involved in hair growth. Plays an important role in adult hippocampal neurogenesis by regulating the timely entry of neural stem/progenitor cells (NSPCs) into the cell cycle and the number of cell divisions that take place prior to cell-cycle exit. Regulates the circadian expression of CIART and KLF11. The CLOCK-BMAL1 heterodimer regulates the circadian expression of SERPINE1/PAI1, VWF, B3, CCRN4L/NOC, NAMPT, DBP, MYOD1, PPARGC1A, PPARGC1B, SIRT1, GYS2, F7, NGFR, GNRHR, BHLHE40/DEC1, ATF4, MTA1, KLF10 and also genes implicated in glucose and lipid metabolism. Promotes rhythmic chromatin opening, regulating the DNA accessibility of other transcription factors. The NPAS2-BMAL1 heterodimer positively regulates the expression of MAOA, F7 and LDHA and modulates the circadian rhythm of daytime contrast sensitivity by regulating the rhythmic expression of adenylate cyclase type 1 (ADCY1) in the retina. The preferred binding motif for the CLOCK-BMAL1 heterodimer is 5'-CACGTGA-3', which contains a flanking adenine nucleotide at the 3-prime end of the canonical 6-nucleotide E-box sequence. CLOCK specifically binds to the half-site 5'-CAC-3', while BMAL1 binds to the half-site 5'-GTGA-3'. The CLOCK-BMAL1 heterodimer also recognizes the non-canonical E-box motifs 5'-AACGTGA-3' and 5'-CATGTGA-3'. Essential for the rhythmic interaction of CLOCK with ASS1 and plays a critical role in positively regulating CLOCK-mediated acetylation of ASS1. Plays a role in protecting against lethal sepsis by limiting the expression of immune checkpoint protein CD274 in macrophages in a PKM2-dependent manner. Regulates the diurnal rhythms of skeletal muscle metabolism via transcriptional activation of genes promoting triglyceride synthesis (DGAT2) and metabolic efficiency (COQ10B). In Pongo abelii (Sumatran orangutan), this protein is Basic helix-loop-helix ARNT-like protein 1 (BMAL1).